The sequence spans 217 residues: Dense granule protein 1 (217 aa).

Positions 1-19 are cleaved as a signal peptide; sequence MARQATFIVALCVCGLAIA. Polar residues predominate over residues 171–183; sequence VASEDSALGNSEE. The segment at 171-217 is disordered; it reads VASEDSALGNSEEQYVEGTVNGSSDPEQERAGGPLIPEGDEQEVDTE. N-linked (GlcNAc...) asparagine glycosylation is present at N191. Residues 208–217 are compositionally biased toward acidic residues; it reads EGDEQEVDTE.

The protein belongs to the Gra7 family.

The protein localises to the secreted. The sequence is that of Dense granule protein 1 (DG1) from Neospora caninum (Coccidian parasite).